Consider the following 640-residue polypeptide: Telomere repeat-binding protein 4 (640 aa).

The 80-residue stretch at 343 to 422 (VKFSIKSLRI…LGNLGFTLEP (80 aa)) folds into the Ubiquitin-like domain. The segment at 442-464 (TDSTKLSERSAASPALETGIPLP) is disordered. An HTH myb-type domain is found at 530-589 (SQRRTRRPFSVTEVEALVSAVEEVGTGRWRDVKLRSFENASHRTYVDLKDKWKTLVHTAS). Positions 558–585 (WRDVKLRSFENASHRTYVDLKDKWKTLV) form a DNA-binding region, H-T-H motif.

Homomultimer. Interacts with SNL1 (via PAH2). Interacts with STO. In terms of tissue distribution, expressed ubiquitously. Highest expression in flowers and roots.

It is found in the nucleus. In terms of biological role, binds specifically to the plant telomeric double-stranded DNA sequences 5'-TTTAGGG-3'. At least 2 repeats of telomeric sequences are required for binding. Induces DNA bending. This chain is Telomere repeat-binding protein 4 (TRP4), found in Arabidopsis thaliana (Mouse-ear cress).